The sequence spans 193 residues: ATP-dependent Clp protease proteolytic subunit (193 aa).

Catalysis depends on S98, which acts as the Nucleophile. The active site involves H123.

This sequence belongs to the peptidase S14 family. In terms of assembly, fourteen ClpP subunits assemble into 2 heptameric rings which stack back to back to give a disk-like structure with a central cavity, resembling the structure of eukaryotic proteasomes.

Its subcellular location is the cytoplasm. It catalyses the reaction Hydrolysis of proteins to small peptides in the presence of ATP and magnesium. alpha-casein is the usual test substrate. In the absence of ATP, only oligopeptides shorter than five residues are hydrolyzed (such as succinyl-Leu-Tyr-|-NHMec, and Leu-Tyr-Leu-|-Tyr-Trp, in which cleavage of the -Tyr-|-Leu- and -Tyr-|-Trp bonds also occurs).. Its function is as follows. Cleaves peptides in various proteins in a process that requires ATP hydrolysis. Has a chymotrypsin-like activity. Plays a major role in the degradation of misfolded proteins. This Glaesserella parasuis serovar 5 (strain SH0165) (Haemophilus parasuis) protein is ATP-dependent Clp protease proteolytic subunit.